A 115-amino-acid polypeptide reads, in one-letter code: Ribonuclease P protein component (115 aa).

This sequence belongs to the RnpA family. Consists of a catalytic RNA component (M1 or rnpB) and a protein subunit.

The enzyme catalyses Endonucleolytic cleavage of RNA, removing 5'-extranucleotides from tRNA precursor.. In terms of biological role, RNaseP catalyzes the removal of the 5'-leader sequence from pre-tRNA to produce the mature 5'-terminus. It can also cleave other RNA substrates such as 4.5S RNA. The protein component plays an auxiliary but essential role in vivo by binding to the 5'-leader sequence and broadening the substrate specificity of the ribozyme. The protein is Ribonuclease P protein component of Staphylococcus epidermidis (strain ATCC 35984 / DSM 28319 / BCRC 17069 / CCUG 31568 / BM 3577 / RP62A).